The sequence spans 118 residues: Large ribosomal subunit protein bL12 (118 aa).

Met1 is modified (N-acetylmethionine; in form MA2).

Belongs to the bacterial ribosomal protein bL12 family. Homodimer. Part of the ribosomal stalk of the 50S ribosomal subunit. Forms a multimeric L10(L12)X complex, where L10 forms an elongated spine to which 2 to 4 L12 dimers bind in a sequential fashion. Binds GTP-bound translation factors. Acetylation of Met-1 converts MA1 to MA2.

Its function is as follows. Forms part of the ribosomal stalk which helps the ribosome interact with GTP-bound translation factors. Is thus essential for accurate translation. The protein is Large ribosomal subunit protein bL12 of Micrococcus luteus (Micrococcus lysodeikticus).